Reading from the N-terminus, the 265-residue chain is Isoprenyl transferase 1 (265 aa).

Asp43 is a catalytic residue. Asp43 provides a ligand contact to Mg(2+). Substrate-binding positions include 44-47 (GNRR), Trp48, His61, and 89-91 (STE). Catalysis depends on Asn92, which acts as the Proton acceptor. Residues Arg95, Arg214, and 220–222 (RLS) contribute to the substrate site. Glu233 lines the Mg(2+) pocket.

Belongs to the UPP synthase family. Homodimer. Mg(2+) is required as a cofactor.

Its function is as follows. Catalyzes the condensation of isopentenyl diphosphate (IPP) with allylic pyrophosphates generating different type of terpenoids. This Corynebacterium diphtheriae (strain ATCC 700971 / NCTC 13129 / Biotype gravis) protein is Isoprenyl transferase 1.